The following is a 728-amino-acid chain: FAS1 domain-containing protein fsc1 (728 aa).

Residues 1–21 (MNLQFRLYLLFILLFISFANG) form the signal peptide. Topologically, residues 22-670 (KNEYEDKSTS…TKRQNRWRIT (649 aa)) are vacuolar. 2 FAS1 domains span residues 29-151 (STSI…DNII) and 154-285 (PPPA…SSLI). Asn89 is a glycosylation site (N-linked (GlcNAc...) asparagine). 2 N-linked (GlcNAc...) asparagine glycosylation sites follow: Asn404 and Asn501. A helical transmembrane segment spans residues 671-691 (FISISGLLLSVGICVLCYKIY). Topologically, residues 692-728 (FKFFRNRFMNQGEREPLLAPADSDTMAGRRNSSSLSV) are cytoplasmic.

It localises to the vacuole membrane. Its function is as follows. Required for the fusion of autophagosomes with the vacuole. In Schizosaccharomyces pombe (strain 972 / ATCC 24843) (Fission yeast), this protein is FAS1 domain-containing protein fsc1 (fsc1).